The sequence spans 724 residues: Methionine--tRNA ligase (724 aa).

A 'HIGH' region motif is present at residues 12–22 (PYVNNIPHLGN). Zn(2+) is bound by residues cysteine 143, cysteine 146, cysteine 155, and cysteine 158. The 'KMSKS' region motif lies at 330 to 334 (KFSKS). Residue lysine 333 participates in ATP binding. In terms of domain architecture, tRNA-binding spans 560–665 (FREKVLLKVV…KNPIPGERII (106 aa)).

It belongs to the class-I aminoacyl-tRNA synthetase family. MetG type 1 subfamily. As to quaternary structure, homodimer. Zn(2+) serves as cofactor.

It is found in the cytoplasm. The catalysed reaction is tRNA(Met) + L-methionine + ATP = L-methionyl-tRNA(Met) + AMP + diphosphate. Functionally, is required not only for elongation of protein synthesis but also for the initiation of all mRNA translation through initiator tRNA(fMet) aminoacylation. This chain is Methionine--tRNA ligase, found in Borrelia garinii subsp. bavariensis (strain ATCC BAA-2496 / DSM 23469 / PBi) (Borreliella bavariensis).